The primary structure comprises 271 residues: Shikimate dehydrogenase-like protein HI_0607 (271 aa).

Lysine 67 acts as the Proton donor/acceptor in catalysis. Aspartate 103 is a substrate binding site. Residues 126–130, lysine 154, and serine 184 each bind NADP(+); that span reads GSGGM.

This sequence belongs to the shikimate dehydrogenase-like family. As to quaternary structure, homodimer.

The enzyme catalyses shikimate + NADP(+) = 3-dehydroshikimate + NADPH + H(+). In vitro, is able to catalyze the NADP(+)-dependent oxidation of shikimate to 3-dehydroshikimate. However, has much lower activity than classical shikimate dehydrogenases AroE, indicating that shikimate may not be the biological substrate. Cannot utilize NAD(+) instead of NADP(+). Is not able to catalyze the oxidation of quinate. This Haemophilus influenzae (strain ATCC 51907 / DSM 11121 / KW20 / Rd) protein is Shikimate dehydrogenase-like protein HI_0607.